Consider the following 676-residue polypeptide: Potassium-transporting ATPase ATP-binding subunit (676 aa).

Transmembrane regions (helical) follow at residues 24-44, 45-65, 212-232, and 246-266; these read NPVM…CFYP, MGIP…TLLF, IFLI…VPFT, and SLVI…GALI. Aspartate 302 functions as the 4-aspartylphosphate intermediate in the catalytic mechanism. ATP is bound by residues aspartate 339, glutamate 343, 372-379, and lysine 390; that span reads FSAKTRMS. Residues aspartate 513 and aspartate 517 each contribute to the Mg(2+) site. 3 helical membrane-spanning segments follow: residues 573–593, 611–631, and 656–676; these read FSIA…FYSI, AILS…PLAL, and GIIA…LIIL.

It belongs to the cation transport ATPase (P-type) (TC 3.A.3) family. Type IA subfamily. The system is composed of three essential subunits: KdpA, KdpB and KdpC.

The protein localises to the cell membrane. It carries out the reaction K(+)(out) + ATP + H2O = K(+)(in) + ADP + phosphate + H(+). In terms of biological role, part of the high-affinity ATP-driven potassium transport (or Kdp) system, which catalyzes the hydrolysis of ATP coupled with the electrogenic transport of potassium into the cytoplasm. This subunit is responsible for energy coupling to the transport system and for the release of the potassium ions to the cytoplasm. The sequence is that of Potassium-transporting ATPase ATP-binding subunit from Enterococcus faecalis (strain ATCC 700802 / V583).